A 324-amino-acid polypeptide reads, in one-letter code: DNA repair and recombination protein RadA (324 aa).

114 to 121 (GEFGSGKT) is a binding site for ATP.

This sequence belongs to the eukaryotic RecA-like protein family.

In terms of biological role, involved in DNA repair and in homologous recombination. Binds and assemble on single-stranded DNA to form a nucleoprotein filament. Hydrolyzes ATP in a ssDNA-dependent manner and promotes DNA strand exchange between homologous DNA molecules. This is DNA repair and recombination protein RadA from Metallosphaera sedula (strain ATCC 51363 / DSM 5348 / JCM 9185 / NBRC 15509 / TH2).